The primary structure comprises 229 residues: Ribonuclease T (229 aa).

The Exonuclease domain maps to 23-197 (VIIDVETAGF…YDTERTAKLF (175 aa)). Mg(2+)-binding residues include Asp26, Glu28, His184, and Asp189. The Proton donor/acceptor role is filled by His184.

Belongs to the RNase T family. In terms of assembly, homodimer. Mg(2+) is required as a cofactor.

Functionally, trims short 3' overhangs of a variety of RNA species, leaving a one or two nucleotide 3' overhang. Responsible for the end-turnover of tRNA: specifically removes the terminal AMP residue from uncharged tRNA (tRNA-C-C-A). Also appears to be involved in tRNA biosynthesis. The chain is Ribonuclease T from Haemophilus influenzae (strain 86-028NP).